The following is a 430-amino-acid chain: MEF2-activating motif and SAP domain-containing transcriptional regulator (430 aa).

The MEF2-binding motif lies at 12-28 (IIRSKFRSVLQLRIHRR). Disordered stretches follow at residues 84-172 (CWSL…PLPH), 204-239 (KSML…RFRP), 280-301 (VATT…APAS), and 330-416 (EDQV…DLSD). Positions 87 to 103 (LKKESPKTSQHWREPKP) are enriched in basic and acidic residues. Residues 147–170 (QPPPRMKPTPLTPSPPGVPSPSPL) are compositionally biased toward pro residues. Residues 181–215 (LEELTVSELRQQLRLRGLPVSGTKSMLLERMRGGA) enclose the SAP domain. Basic and acidic residues predominate over residues 207–228 (LLERMRGGAPPRERPKARREDS). The tract at residues 224 to 430 (RREDSAAGAP…RLWDLLEDPW (207 aa)) is transcription activation. Low complexity-rich tracts occupy residues 363 to 373 (SSVFSSSLPSP) and 393 to 403 (ALSGGPSLGCG).

Interacts with MEF2C.

The protein resides in the nucleus. In terms of biological role, transcriptional coactivator. Stimulates the transcriptional activity of MEF2C. Stimulates MYOD1 activity in part via MEF2, resulting in an enhancement of skeletal muscle differentiation. In Bos taurus (Bovine), this protein is MEF2-activating motif and SAP domain-containing transcriptional regulator (MAMSTR).